The sequence spans 498 residues: Thiamine transporter 1 (498 aa).

The residue at position 1 (Met-1) is an N-acetylmethionine. Topologically, residues 1–28 (MDVPARVSRRAAAAAARMLLRTARVPRE) are cytoplasmic. A helical membrane pass occupies residues 29–46 (CWFLPTALLCAYGFFANL). The Extracellular portion of the chain corresponds to 47-71 (RPSEPFLTPYLLGPDKNLTERQVYN). The N-linked (GlcNAc...) asparagine glycan is linked to Asn-63. Residues 72–92 (EIYPVWTYSYLLLLFPVFLAT) form a helical membrane-spanning segment. The Cytoplasmic portion of the chain corresponds to 93-105 (DYLRYKPVILLQG). Residues 106–126 (LSLIVTWFMLLYAQGLLAIQF) form a helical membrane-spanning segment. The Extracellular segment spans residues 127–128 (LE). A helical transmembrane segment spans residues 129–149 (FFYGIATATEIAYYSYIYTVV). Over 150–164 (DLGMYQKVTSYCRSA) the chain is Cytoplasmic. Residues 165–185 (TLVGFTVGSVLGQILVSVVGW) traverse the membrane as a helical segment. A topological domain (extracellular) is located at residue Ser-186. A helical transmembrane segment spans residues 187-207 (LFSLNVISLTCVSVAFAVAWF). Residues 208 to 295 (LPMPQKSLFF…DFLMCYSSRP (88 aa)) lie on the Cytoplasmic side of the membrane. The residue at position 222 (Ser-222) is a Phosphoserine. The chain crosses the membrane as a helical span at residues 296–316 (LLCWSVWWALSTCGYFQVVNY). Residues 317 to 334 (AQGLWEKVMPSQNADIYN) lie on the Extracellular side of the membrane. A helical transmembrane segment spans residues 335–355 (GGVEAVSTLLGASAVFAVGYI). Topologically, residues 356–360 (KLSWS) are cytoplasmic. The helical transmembrane segment at 361–381 (TWGEMTLFLCSLLIAAAVYVM) threads the bilayer. At 382-386 (DTVQS) the chain is on the extracellular side. A helical membrane pass occupies residues 387–407 (IWVCYASYVVFRIIYMVLITI). The Cytoplasmic segment spans residues 408-423 (ATFQIAANLSMERYAL). Residues 424 to 444 (VFGVNTFIALALQTLLTLIVV) form a helical membrane-spanning segment. Over 445–456 (DARGLGLCITTQ) the chain is Extracellular. A helical membrane pass occupies residues 457–477 (FLIYASYFAAISVVFLANGIV). Residues 478-498 (SIIKKCRKQEDPSSSPQASTS) lie on the Cytoplasmic side of the membrane.

Belongs to the reduced folate carrier (RFC) transporter (TC 2.A.48) family. As to quaternary structure, interacts with TSPAN1; this interaction increases the stability of SLC19A2. Interacts with TMEM63B. Expressed in liver. Expressed in cochlear hair cells and duodenum (at protein level). Detected in pancreatic acinar cells (at protein level). Also expressed strongly in pancreatic islet cells. Expressed in the testis. In terms of tissue distribution, very highly expressed in liver, and also detected at lower levels in heart, testis, kidney, brain and spleen. As to expression, expressed at low levels in liver and spleen.

It is found in the cell membrane. The catalysed reaction is thiamine(out) + H(+)(in) = thiamine(in) + H(+)(out). It catalyses the reaction pyridoxine(out) + n H(+)(out) = pyridoxine(in) + n H(+)(in). High-affinity transporter for the intake of thiamine. Essential for spermatogenesis. Mediates H(+)-dependent pyridoxine transport. In Mus musculus (Mouse), this protein is Thiamine transporter 1.